The chain runs to 355 residues: Holliday junction branch migration complex subunit RuvB (355 aa).

Positions 4–190 are large ATPase domain (RuvB-L); that stretch reads TDKLAAERII…FGIVARLEFY (187 aa). ATP-binding positions include leucine 29, arginine 30, glycine 71, lysine 74, threonine 75, threonine 76, 137–139, arginine 180, tyrosine 190, and arginine 227; that span reads EDY. Threonine 75 serves as a coordination point for Mg(2+). The small ATPAse domain (RuvB-S) stretch occupies residues 191–261; sequence NAEQLARIVT…VADAALKMLD (71 aa). The segment at 264–355 is head domain (RuvB-H); it reads AVGFDLMDRK…LPGLWDSAAT (92 aa). Residues arginine 300, arginine 319, and arginine 324 each coordinate DNA.

Belongs to the RuvB family. As to quaternary structure, homohexamer. Forms an RuvA(8)-RuvB(12)-Holliday junction (HJ) complex. HJ DNA is sandwiched between 2 RuvA tetramers; dsDNA enters through RuvA and exits via RuvB. An RuvB hexamer assembles on each DNA strand where it exits the tetramer. Each RuvB hexamer is contacted by two RuvA subunits (via domain III) on 2 adjacent RuvB subunits; this complex drives branch migration. In the full resolvosome a probable DNA-RuvA(4)-RuvB(12)-RuvC(2) complex forms which resolves the HJ.

It localises to the cytoplasm. The catalysed reaction is ATP + H2O = ADP + phosphate + H(+). Functionally, the RuvA-RuvB-RuvC complex processes Holliday junction (HJ) DNA during genetic recombination and DNA repair, while the RuvA-RuvB complex plays an important role in the rescue of blocked DNA replication forks via replication fork reversal (RFR). RuvA specifically binds to HJ cruciform DNA, conferring on it an open structure. The RuvB hexamer acts as an ATP-dependent pump, pulling dsDNA into and through the RuvAB complex. RuvB forms 2 homohexamers on either side of HJ DNA bound by 1 or 2 RuvA tetramers; 4 subunits per hexamer contact DNA at a time. Coordinated motions by a converter formed by DNA-disengaged RuvB subunits stimulates ATP hydrolysis and nucleotide exchange. Immobilization of the converter enables RuvB to convert the ATP-contained energy into a lever motion, pulling 2 nucleotides of DNA out of the RuvA tetramer per ATP hydrolyzed, thus driving DNA branch migration. The RuvB motors rotate together with the DNA substrate, which together with the progressing nucleotide cycle form the mechanistic basis for DNA recombination by continuous HJ branch migration. Branch migration allows RuvC to scan DNA until it finds its consensus sequence, where it cleaves and resolves cruciform DNA. The protein is Holliday junction branch migration complex subunit RuvB of Paraburkholderia xenovorans (strain LB400).